The sequence spans 365 residues: Aminomethyltransferase (365 aa).

The protein belongs to the GcvT family. The glycine cleavage system is composed of four proteins: P, T, L and H.

It carries out the reaction N(6)-[(R)-S(8)-aminomethyldihydrolipoyl]-L-lysyl-[protein] + (6S)-5,6,7,8-tetrahydrofolate = N(6)-[(R)-dihydrolipoyl]-L-lysyl-[protein] + (6R)-5,10-methylene-5,6,7,8-tetrahydrofolate + NH4(+). Its function is as follows. The glycine cleavage system catalyzes the degradation of glycine. This Pelodictyon phaeoclathratiforme (strain DSM 5477 / BU-1) protein is Aminomethyltransferase.